A 323-amino-acid polypeptide reads, in one-letter code: NADH-ubiquinone oxidoreductase chain 1 (323 aa).

9 consecutive transmembrane segments (helical) span residues 10–30 (LLYI…GLLI), 52–72 (PNVV…KLVL), 84–104 (IIYA…WSVI), 119–139 (VIFI…AGWA), 157–177 (VSYE…AGTV), 189–209 (VWFI…ALAE), 245–265 (YANI…GIVS), 268–288 (ISGA…RATL), and 302–322 (KSLL…VLII).

Belongs to the complex I subunit 1 family.

It is found in the mitochondrion inner membrane. The enzyme catalyses a ubiquinone + NADH + 5 H(+)(in) = a ubiquinol + NAD(+) + 4 H(+)(out). Functionally, core subunit of the mitochondrial membrane respiratory chain NADH dehydrogenase (Complex I) that is believed to belong to the minimal assembly required for catalysis. Complex I functions in the transfer of electrons from NADH to the respiratory chain. The immediate electron acceptor for the enzyme is believed to be ubiquinone. This chain is NADH-ubiquinone oxidoreductase chain 1 (nad1), found in Dictyostelium citrinum (Slime mold).